Reading from the N-terminus, the 577-residue chain is Torulene dioxygenase (577 aa).

Residues 1-20 (MALNGPGVYHRTREHEQEDA) are disordered. The Fe(2+) site is built by His239, His291, His361, and His570.

The protein belongs to the carotenoid oxygenase family. It depends on Fe(2+) as a cofactor.

It localises to the cytoplasm. Its subcellular location is the cytosol. It catalyses the reaction torulene + O2 = 4'-apo-beta-carotenal + 3-methyl-2-butenal. It participates in carotenoid biosynthesis. Torulene dioxygenase; part of pathway that mediates the biosynthesis of neurosporaxanthin, a carboxylic apocarotenoid acting as an essential protective pigments and leading to orange pigmentation. CarT mediates the cleavage of torulene into beta-apo-4'-carotenal, the aldehyde corresponding to the acidic neurosporaxanthin. Is also active on other monocyclic synthetic substrates such as beta-apo-8'-carotenal and beta-apo-10'-carotenal to produce beta-apo-14'-carotenal and retinal(beta-apo-15'-carotenal), respectively. Neurosporaxanthin is synthesized from geranyl-geranyl pyrophosphate (GGPP) through several enzymatic activities. Phytoene synthase activity performed by the bifunctional enzyme carAR first produces phytoene from geranyl-geranyl pyrophosphate (GGPP). The phytoene dehydrogenase carB then introduces 4 desaturations to lead to lycopene which is substrate of the carotene cyclase activity of carAR that leads to the production of gamma-carotene. CarB then performs a 5th desaturation reaction to yield torulene. Torulene is the substrate of the dioxidase carT that breaks the molecule, removing five carbon atoms to yield beta-apo-4'-carotenal, whereas the aldehyde dehydrogenase carD mediates the last step by converting beta-apo-4'-carotenal into neurosporaxanthin. The protein is Torulene dioxygenase of Gibberella fujikuroi (strain CBS 195.34 / IMI 58289 / NRRL A-6831) (Bakanae and foot rot disease fungus).